The primary structure comprises 249 residues: UDP-2,3-diacylglucosamine hydrolase (249 aa).

5 residues coordinate Mn(2+): Asp7, His9, Asp40, Asn78, and His113. 78 to 79 (NR) is a binding site for substrate. Asp121, Ser159, Thr163, Lys166, and His194 together coordinate substrate. Mn(2+) is bound by residues His194 and His196.

Belongs to the LpxH family. Mn(2+) is required as a cofactor.

It is found in the cell inner membrane. The enzyme catalyses UDP-2-N,3-O-bis[(3R)-3-hydroxytetradecanoyl]-alpha-D-glucosamine + H2O = 2-N,3-O-bis[(3R)-3-hydroxytetradecanoyl]-alpha-D-glucosaminyl 1-phosphate + UMP + 2 H(+). The protein operates within glycolipid biosynthesis; lipid IV(A) biosynthesis; lipid IV(A) from (3R)-3-hydroxytetradecanoyl-[acyl-carrier-protein] and UDP-N-acetyl-alpha-D-glucosamine: step 4/6. Hydrolyzes the pyrophosphate bond of UDP-2,3-diacylglucosamine to yield 2,3-diacylglucosamine 1-phosphate (lipid X) and UMP by catalyzing the attack of water at the alpha-P atom. Involved in the biosynthesis of lipid A, a phosphorylated glycolipid that anchors the lipopolysaccharide to the outer membrane of the cell. This is UDP-2,3-diacylglucosamine hydrolase from Pseudomonas fluorescens (strain SBW25).